The chain runs to 1450 residues: MEAGYAEIAAVQFNIAGDNDHKRQGVMEVTISNLFEGTLPAEGGIYDARMGTTDHHYKCITCSHQRKQCMGHPGILQMHAPVLQPLFIAEIRRWLRVICLNCGAPIVDLKRYEHLIRPKRLVEAASGQTEGKQCYVCKVIHPKIIKDSEDYFTFWVDQQGKIDKLYPQIIREIFSRVTYDTVVKLGRSKNSHPEKLVLKAIQIPPISIRPGIRLGIGSGPQSFHDINNVIQYLVRKNLLIPKDLQIVRGQKIPLNVDRNLQTIQQLYYNFLLDSVSTTATQGGTGKRGIVMGARPAPSIMRRLPRKEGRIRKSLLGSQVWSISRSTICGNSDLHLDEVGYPISFARTLQVAETVQHYNINRLMPYFLNGKRQYPGCSRVYKQITQSVHDIEGLKQDFRLEVGDILYRDVVTGDVAFFNRQPSLERSSIGVHRIVVLENPKISTFQMNVSACAWYNADFDGDQMNLWVPWSVMSRVEAELLCSVRNWFISTKSSGPVNGQVQDSTVGSFLLTRTNTPMGKNVMNKLHAMGLFQTTQTDPPCFANYSPTDLLDGKSVVSMLLKQTPINYQRAPTWYSEVYAPYMHYNKQDISTQIRNGELIEGVLDKKAVGAGSSGGIYHLISRRYGPQQALKMIFATQQLALNYVRNAGFTVSTADMLLTPEAHQEVQEIINELLLESEEINNRLLHGDIMPPIGLTTHDFYEKLQLNALKFPDRILKPIMNSINPETNGLFQMVATGAKGSNPNMIHIMAGIGQIEINTQRIQPQFSFGRTLVYYPRFALEAQAYGFICNSYIAGLTSPEFIFGEMNGRFDLINKALSTSSTGYANRKAIFGLQSCIVDYYRRVSIDTRLVQQLYGEDGLDARQLETVRFETIMLSDQELEDKFKYTGIQSPLFEEEFSRLKKDRDKYRQIFLNIENFNFSQLLTDIRQVPVNVASIVKNILLSSTSGVLPFDEKSILQKYTMVKTFCKNLPYVFINNIQERLQTPIPVYLKRAASLMRMLIRIELATVKTLNITCEQMSAILDLIRLQYTQSLINYGEAVGILAAQSVSEPLTQYMLDSHHRSVAGGTNKSGIVRPQEIFSAKPVEAEQSSEMLLRLKNPEVETNKTYAQEIANSIELITFERLILQWHLLYETYSSTKKNVMYPDFASDVEWMTDFLENHPLLQPPEDIANWCIRLELNKTTMILKSISLESIINSLRAKHPNSYIMHSVENTASGIPIIIRIYLRESAFRRSTNTRMATDEKIAVNMVDKLLNSTIRGIPGIKNANVVKLMRHRVDAQGKLARLDNIYAIKTNGTNIFGAMLDDNIDPYTIVSSSIGDTMELYGIEAARQKIISEIRTVMGDKGPNHRHLLMYADLMTRTGQVTSLEKAGLNAREPSNVLLRMALSSPVQVLTDAAVDSAVNPIYGIAAPTLMGSVPRIGTMYSDIIMDEKYITENYKSVDSMIDML.

This sequence belongs to the RNA polymerase beta' chain family. Part of the viral DNA-directed RNA polymerase that consists of 8 polII-like subunits (RPB1, RPB2, RPB3, RPB5, RPB6, RPB7, RPB9, RPB10), a capping enzyme and a termination factor.

Its subcellular location is the virion. It carries out the reaction RNA(n) + a ribonucleoside 5'-triphosphate = RNA(n+1) + diphosphate. Its function is as follows. Catalytic component of the DNA-directed RNA polymerase (RNAP) that catalyzes the transcription in the cytoplasm of viral DNA into RNA using the four ribonucleoside triphosphates as substrates. Forms the polymerase active center together with RPB2. Part of the core element with the central large cleft, the clamp element that moves to open and close the cleft and the jaws that are thought to grab the incoming DNA template. In Ornithodoros (relapsing fever ticks), this protein is DNA-directed RNA polymerase RPB1 homolog.